The following is a 664-amino-acid chain: Zinc finger protein 800 (664 aa).

A C2H2-type 1; degenerate zinc finger spans residues 69–91; it reads FECKLCRSLFRGLPNLITHKKFY. Residue K132 forms a Glycyl lysine isopeptide (Lys-Gly) (interchain with G-Cter in SUMO2) linkage. 2 stretches are compositionally biased toward polar residues: residues 154-179 and 207-224; these read IEVT…EQSK and SDEQ…SDNS. The disordered stretch occupies residues 154–224; the sequence is IEVTESSSTP…QADLETSDNS (71 aa). A C2H2-type 2 zinc finger spans residues 230–253; it reads LICCLCRKEFNSRRGVRRHIRKVH. K279 participates in a covalent cross-link: Glycyl lysine isopeptide (Lys-Gly) (interchain with G-Cter in SUMO2). The C2H2-type 3 zinc finger occupies 287 to 310; it reads RSCPVCCKSFATKANVRRHFDEVH. S317 carries the post-translational modification Phosphoserine. Position 319 is a phosphothreonine (T319). The disordered stretch occupies residues 328 to 349; it reads QPLFLDSISPKKSFKTRKQKSS. S336 carries the post-translational modification Phosphoserine. Residues 339-348 are compositionally biased toward basic residues; sequence KSFKTRKQKS. A C2H2-type 4 zinc finger spans residues 357-382; sequence TACKCLLCKRKYSSQIMLKRHMQIVH. A disordered region spans residues 388-476; it reads GTNSKREKGP…GGQQKTRKPK (89 aa). Residue K392 forms a Glycyl lysine isopeptide (Lys-Gly) (interchain with G-Cter in SUMO2) linkage. K409 is covalently cross-linked (Glycyl lysine isopeptide (Lys-Gly) (interchain with G-Cter in SUMO1); alternate). Residue K409 forms a Glycyl lysine isopeptide (Lys-Gly) (interchain with G-Cter in SUMO2); alternate linkage. Positions 416 to 436 are enriched in polar residues; the sequence is VESSPPSITHSPQNELKGTNH. Residues S422, S426, S455, S457, S460, and S462 each carry the phosphoserine modification. The segment covering 458-470 has biased composition (polar residues); sequence PKSTSPSAAGGQQ. K476 participates in a covalent cross-link: Glycyl lysine isopeptide (Lys-Gly) (interchain with G-Cter in SUMO2). 2 consecutive C2H2-type zinc fingers follow at residues 486 to 508 and 519 to 542; these read LYCK…IELH and YKCP…TVVH. 2 disordered regions span residues 574 to 599 and 635 to 664; these read KRGP…PSKK and HHKK…KALV. Residues 577–591 show a composition bias toward basic and acidic residues; that stretch reads PSRDEAKHSDSKHDG. K599 participates in a covalent cross-link: Glycyl lysine isopeptide (Lys-Gly) (interchain with G-Cter in SUMO2). A C2H2-type 7 zinc finger spans residues 618–640; that stretch reads HRCNKCGKAFAKKTYLEHHKKTH. A compositionally biased stretch (basic residues) spans 653–664; it reads TKGRSTRSKALV.

It belongs to the krueppel C2H2-type zinc-finger protein family.

It is found in the nucleus. Functionally, may be involved in transcriptional regulation. This Homo sapiens (Human) protein is Zinc finger protein 800 (ZNF800).